The chain runs to 625 residues: Enolase 4 (625 aa).

Residues 184–226 (YSTVPTPLPPVPPPPPPPPPTKKKGQKPGRKDTITEKPIAPAE) form a disordered region. A compositionally biased stretch (pro residues) spans 189–203 (TPLPPVPPPPPPPPP). Residue V300 coordinates substrate. A disordered region spans residues 331–350 (PSPPKAETKKGHDGSKRGQQ). Basic and acidic residues predominate over residues 336–346 (AETKKGHDGSK). N497 (proton acceptor) is an active-site residue. G548 is a binding site for substrate. The segment at 604–625 (PLVPTFPTQGVEESAETGASSG) is disordered.

It belongs to the enolase family. In terms of assembly, interacts with ENO1 and AKAP4. Post-translationally, synthesized as an approximately 70-kDa precursor, which then undergoes proteolytic cleavage to an approximately 60-kDa enzyme; HOATZ associates directly or indirectly with ENO4 to mediate this process before its transport to mature flagella.

The enzyme catalyses (2R)-2-phosphoglycerate = phosphoenolpyruvate + H2O. Its pathway is carbohydrate degradation; glycolysis; pyruvate from D-glyceraldehyde 3-phosphate: step 4/5. Its function is as follows. May be required for sperm motility and function. The sequence is that of Enolase 4 from Homo sapiens (Human).